A 234-amino-acid polypeptide reads, in one-letter code: MKNLVILSGAGISAESGIKTFRDAGGLWEGHDIMEVASPYGWKKNPQKVLDFYNQRRRQLFEVYPNKAHKALAELEKHYQVNIITQNVDDLHERAGSSRILHLHGELLSVRSEKDPNLVYRWEKDLNLGDLAQDKAQLRPDIVWFGEEVPLLKEAVSLVKQVHLLIIIGTSLQVYPAASLYTHANKDALIYYIDPKAKNARLPQNVQCINENAVHAMQDLMPKLIEMASQEMLK.

In terms of domain architecture, Deacetylase sirtuin-type spans 1 to 234 (MKNLVILSGA…IEMASQEMLK (234 aa)). Position 9–28 (9–28 (GAGISAESGIKTFRDAGGLW)) interacts with NAD(+). Substrate contacts are provided by Tyr53 and Arg56. Residue 86–89 (QNVD) coordinates NAD(+). His104 functions as the Proton acceptor in the catalytic mechanism. NAD(+)-binding positions include 169-171 (GTS) and Met217.

This sequence belongs to the sirtuin family. Class III subfamily.

The protein resides in the cytoplasm. The enzyme catalyses N(6)-acetyl-L-lysyl-[protein] + NAD(+) + H2O = 2''-O-acetyl-ADP-D-ribose + nicotinamide + L-lysyl-[protein]. The catalysed reaction is N(6)-succinyl-L-lysyl-[protein] + NAD(+) + H2O = 2''-O-succinyl-ADP-D-ribose + nicotinamide + L-lysyl-[protein]. In terms of biological role, NAD-dependent lysine deacetylase and desuccinylase that specifically removes acetyl and succinyl groups on target proteins. Modulates the activities of several proteins which are inactive in their acylated form. This chain is NAD-dependent protein deacylase, found in Helicobacter pylori (strain J99 / ATCC 700824) (Campylobacter pylori J99).